Here is a 575-residue protein sequence, read N- to C-terminus: Dihydroxy-acid dehydratase (575 aa).

Position 64 (C64) interacts with [2Fe-2S] cluster. D96 contacts Mg(2+). C137 lines the [2Fe-2S] cluster pocket. Mg(2+)-binding residues include D138 and K139. At K139 the chain carries N6-carboxylysine. C214 is a binding site for [2Fe-2S] cluster. Mg(2+) is bound at residue E465. The Proton acceptor role is filled by S491.

The protein belongs to the IlvD/Edd family. Homodimer. Requires [2Fe-2S] cluster as cofactor. Mg(2+) is required as a cofactor.

The catalysed reaction is (2R)-2,3-dihydroxy-3-methylbutanoate = 3-methyl-2-oxobutanoate + H2O. The enzyme catalyses (2R,3R)-2,3-dihydroxy-3-methylpentanoate = (S)-3-methyl-2-oxopentanoate + H2O. It functions in the pathway amino-acid biosynthesis; L-isoleucine biosynthesis; L-isoleucine from 2-oxobutanoate: step 3/4. The protein operates within amino-acid biosynthesis; L-valine biosynthesis; L-valine from pyruvate: step 3/4. Its function is as follows. Functions in the biosynthesis of branched-chain amino acids. Catalyzes the dehydration of (2R,3R)-2,3-dihydroxy-3-methylpentanoate (2,3-dihydroxy-3-methylvalerate) into 2-oxo-3-methylpentanoate (2-oxo-3-methylvalerate) and of (2R)-2,3-dihydroxy-3-methylbutanoate (2,3-dihydroxyisovalerate) into 2-oxo-3-methylbutanoate (2-oxoisovalerate), the penultimate precursor to L-isoleucine and L-valine, respectively. This chain is Dihydroxy-acid dehydratase, found in Mycobacterium bovis (strain ATCC BAA-935 / AF2122/97).